Reading from the N-terminus, the 335-residue chain is Holliday junction branch migration complex subunit RuvB (335 aa).

A large ATPase domain (RuvB-L) region spans residues 1–183 (MDERIISSET…FGVIDHLEFY (183 aa)). Residues leucine 22, arginine 23, glycine 64, lysine 67, threonine 68, threonine 69, 130–132 (EDY), arginine 173, tyrosine 183, and arginine 220 each bind ATP. Threonine 68 is a binding site for Mg(2+). Residues 184–254 (TEEQLTEIVL…LAKEALTLLQ (71 aa)) form a small ATPAse domain (RuvB-S) region. The tract at residues 257-335 (PRGLDTIDQK…HLGISYEKEV (79 aa)) is head domain (RuvB-H). The DNA site is built by arginine 293, arginine 312, and arginine 317.

Belongs to the RuvB family. Homohexamer. Forms an RuvA(8)-RuvB(12)-Holliday junction (HJ) complex. HJ DNA is sandwiched between 2 RuvA tetramers; dsDNA enters through RuvA and exits via RuvB. An RuvB hexamer assembles on each DNA strand where it exits the tetramer. Each RuvB hexamer is contacted by two RuvA subunits (via domain III) on 2 adjacent RuvB subunits; this complex drives branch migration. In the full resolvosome a probable DNA-RuvA(4)-RuvB(12)-RuvC(2) complex forms which resolves the HJ.

Its subcellular location is the cytoplasm. It catalyses the reaction ATP + H2O = ADP + phosphate + H(+). Its function is as follows. The RuvA-RuvB-RuvC complex processes Holliday junction (HJ) DNA during genetic recombination and DNA repair, while the RuvA-RuvB complex plays an important role in the rescue of blocked DNA replication forks via replication fork reversal (RFR). RuvA specifically binds to HJ cruciform DNA, conferring on it an open structure. The RuvB hexamer acts as an ATP-dependent pump, pulling dsDNA into and through the RuvAB complex. RuvB forms 2 homohexamers on either side of HJ DNA bound by 1 or 2 RuvA tetramers; 4 subunits per hexamer contact DNA at a time. Coordinated motions by a converter formed by DNA-disengaged RuvB subunits stimulates ATP hydrolysis and nucleotide exchange. Immobilization of the converter enables RuvB to convert the ATP-contained energy into a lever motion, pulling 2 nucleotides of DNA out of the RuvA tetramer per ATP hydrolyzed, thus driving DNA branch migration. The RuvB motors rotate together with the DNA substrate, which together with the progressing nucleotide cycle form the mechanistic basis for DNA recombination by continuous HJ branch migration. Branch migration allows RuvC to scan DNA until it finds its consensus sequence, where it cleaves and resolves cruciform DNA. This chain is Holliday junction branch migration complex subunit RuvB, found in Listeria monocytogenes serotype 4a (strain HCC23).